Here is a 65-residue protein sequence, read N- to C-terminus: Large ribosomal subunit protein bL35 (65 aa).

The tract at residues 1 to 40 is disordered; sequence MPKMKTNSGSKKRFALTGTGKIKRKHAFHSHILTKKSKKR. Residues 21-40 are compositionally biased toward basic residues; the sequence is KIKRKHAFHSHILTKKSKKR.

The protein belongs to the bacterial ribosomal protein bL35 family.

This is Large ribosomal subunit protein bL35 from Bacteroides fragilis (strain ATCC 25285 / DSM 2151 / CCUG 4856 / JCM 11019 / LMG 10263 / NCTC 9343 / Onslow / VPI 2553 / EN-2).